The sequence spans 311 residues: p-hydroxybenzoic acid efflux pump subunit AaeA (311 aa).

A helical membrane pass occupies residues 11 to 31 (IGITLLVVLLAVIAIFKVWAF).

This sequence belongs to the membrane fusion protein (MFP) (TC 8.A.1) family.

The protein resides in the cell inner membrane. Functionally, forms an efflux pump with AaeB. This is p-hydroxybenzoic acid efflux pump subunit AaeA from Yersinia enterocolitica serotype O:8 / biotype 1B (strain NCTC 13174 / 8081).